Consider the following 194-residue polypeptide: Ion-translocating oxidoreductase complex subunit A (194 aa).

Transmembrane regions (helical) follow at residues Leu-4–Gly-24, Ile-39–Val-59, Phe-71–Val-91, Val-102–Leu-122, Phe-131–Leu-151, and Ala-172–Ile-192.

Belongs to the NqrDE/RnfAE family. The complex is composed of six subunits: RnfA, RnfB, RnfC, RnfD, RnfE and RnfG.

The protein localises to the cell inner membrane. Its function is as follows. Part of a membrane-bound complex that couples electron transfer with translocation of ions across the membrane. The chain is Ion-translocating oxidoreductase complex subunit A from Ectopseudomonas mendocina (strain ymp) (Pseudomonas mendocina).